Consider the following 261-residue polypeptide: tRNA pseudouridine synthase A (261 aa).

Asp-52 acts as the Nucleophile in catalysis. Tyr-110 is a binding site for substrate.

Belongs to the tRNA pseudouridine synthase TruA family. In terms of assembly, homodimer.

It catalyses the reaction uridine(38/39/40) in tRNA = pseudouridine(38/39/40) in tRNA. Its function is as follows. Formation of pseudouridine at positions 38, 39 and 40 in the anticodon stem and loop of transfer RNAs. The polypeptide is tRNA pseudouridine synthase A (Blochmanniella pennsylvanica (strain BPEN)).